The primary structure comprises 285 residues: Bifunctional protein FolD (285 aa).

NADP(+) contacts are provided by residues 169 to 171 (GRS), serine 194, and isoleucine 235.

It belongs to the tetrahydrofolate dehydrogenase/cyclohydrolase family. As to quaternary structure, homodimer.

The enzyme catalyses (6R)-5,10-methylene-5,6,7,8-tetrahydrofolate + NADP(+) = (6R)-5,10-methenyltetrahydrofolate + NADPH. It carries out the reaction (6R)-5,10-methenyltetrahydrofolate + H2O = (6R)-10-formyltetrahydrofolate + H(+). It participates in one-carbon metabolism; tetrahydrofolate interconversion. Its function is as follows. Catalyzes the oxidation of 5,10-methylenetetrahydrofolate to 5,10-methenyltetrahydrofolate and then the hydrolysis of 5,10-methenyltetrahydrofolate to 10-formyltetrahydrofolate. This Microcystis aeruginosa (strain NIES-843 / IAM M-2473) protein is Bifunctional protein FolD.